The sequence spans 183 residues: Probable GTP-binding protein EngB (183 aa).

The EngB-type G domain maps to 17–183; that stretch reads DYPEVVFVGR…KKELLSRILN (167 aa). Residues 25–32, 51–55, 69–72, 137–140, and 166–168 contribute to the GTP site; these read GRSNVGKS, GRTRA, DVPG, TKID, and SSA. The Mg(2+) site is built by S32 and T53.

This sequence belongs to the TRAFAC class TrmE-Era-EngA-EngB-Septin-like GTPase superfamily. EngB GTPase family. Mg(2+) serves as cofactor.

In terms of biological role, necessary for normal cell division and for the maintenance of normal septation. The chain is Probable GTP-binding protein EngB from Aquifex aeolicus (strain VF5).